We begin with the raw amino-acid sequence, 129 residues long: Small ribosomal subunit protein uS9 (129 aa).

The protein belongs to the universal ribosomal protein uS9 family.

This is Small ribosomal subunit protein uS9 from Chlorobium limicola (strain DSM 245 / NBRC 103803 / 6330).